Reading from the N-terminus, the 206-residue chain is Octanoyltransferase (206 aa).

The BPL/LPL catalytic domain maps to 30 to 206 (PETNDEIWLV…EFVTLLNNSI (177 aa)). Residues 69 to 76 (RGGQVTYH), 137 to 139 (SLG), and 150 to 152 (GIA) contribute to the substrate site. C168 acts as the Acyl-thioester intermediate in catalysis.

This sequence belongs to the LipB family.

Its subcellular location is the cytoplasm. The catalysed reaction is octanoyl-[ACP] + L-lysyl-[protein] = N(6)-octanoyl-L-lysyl-[protein] + holo-[ACP] + H(+). It functions in the pathway protein modification; protein lipoylation via endogenous pathway; protein N(6)-(lipoyl)lysine from octanoyl-[acyl-carrier-protein]: step 1/2. Functionally, catalyzes the transfer of endogenously produced octanoic acid from octanoyl-acyl-carrier-protein onto the lipoyl domains of lipoate-dependent enzymes. Lipoyl-ACP can also act as a substrate although octanoyl-ACP is likely to be the physiological substrate. The chain is Octanoyltransferase from Francisella tularensis subsp. tularensis (strain FSC 198).